The following is a 131-amino-acid chain: Small ribosomal subunit protein uS9 (131 aa).

A disordered region spans residues 102–131; sequence AGFLTRDPRMKERRKYGLKKARKAPQFSKR. Residues 112–131 are compositionally biased toward basic residues; the sequence is KERRKYGLKKARKAPQFSKR.

This sequence belongs to the universal ribosomal protein uS9 family.

This Desulfitobacterium hafniense (strain DSM 10664 / DCB-2) protein is Small ribosomal subunit protein uS9.